Reading from the N-terminus, the 933-residue chain is Isoleucine--tRNA ligase (933 aa).

Residues Pro57–His67 carry the 'HIGH' region motif. Glu554 provides a ligand contact to L-isoleucyl-5'-AMP. Residues Lys595–Ser599 carry the 'KMSKS' region motif. Lys598 is a binding site for ATP.

Belongs to the class-I aminoacyl-tRNA synthetase family. IleS type 1 subfamily. Monomer.

Its subcellular location is the cytoplasm. The catalysed reaction is tRNA(Ile) + L-isoleucine + ATP = L-isoleucyl-tRNA(Ile) + AMP + diphosphate. Functionally, catalyzes the attachment of isoleucine to tRNA(Ile). As IleRS can inadvertently accommodate and process structurally similar amino acids such as valine, to avoid such errors it has two additional distinct tRNA(Ile)-dependent editing activities. One activity is designated as 'pretransfer' editing and involves the hydrolysis of activated Val-AMP. The other activity is designated 'posttransfer' editing and involves deacylation of mischarged Val-tRNA(Ile). The chain is Isoleucine--tRNA ligase from Streptococcus pyogenes serotype M18 (strain MGAS8232).